The primary structure comprises 270 residues: Phthiotriol/phenolphthiotriol dimycocerosates methyltransferase (270 aa).

The protein belongs to the methyltransferase superfamily. Phthiotriol/phenolphthiotriol dimycocerosates methyltransferase family.

Its function is as follows. Catalyzes the methylation of the lipid moiety of the intermediate compounds phthiotriol and glycosylated phenolphthiotriol dimycoserosates to form phthiocerol dimycocerosates (DIM A) and glycosylated phenolphthiocerol dimycocerosates (PGL). This is Phthiotriol/phenolphthiotriol dimycocerosates methyltransferase from Mycobacterium leprae (strain TN).